The primary structure comprises 345 residues: Anthranilate phosphoribosyltransferase (345 aa).

5-phospho-alpha-D-ribose 1-diphosphate contacts are provided by residues 77–79 (TAG), 82–83 (GD), Thr-87, 89–92 (NVST), 106–114 (KHGNRAVSG), and Ser-118. Gly-79 contributes to the anthranilate binding site. Ser-91 is a binding site for Mg(2+). Asn-109 contacts anthranilate. Arg-164 contacts anthranilate. Mg(2+) is bound by residues Asp-223 and Glu-224.

This sequence belongs to the anthranilate phosphoribosyltransferase family. In terms of assembly, homodimer. Requires Mg(2+) as cofactor.

It carries out the reaction N-(5-phospho-beta-D-ribosyl)anthranilate + diphosphate = 5-phospho-alpha-D-ribose 1-diphosphate + anthranilate. It functions in the pathway amino-acid biosynthesis; L-tryptophan biosynthesis; L-tryptophan from chorismate: step 2/5. Its function is as follows. Catalyzes the transfer of the phosphoribosyl group of 5-phosphorylribose-1-pyrophosphate (PRPP) to anthranilate to yield N-(5'-phosphoribosyl)-anthranilate (PRA). The sequence is that of Anthranilate phosphoribosyltransferase from Saccharolobus solfataricus (strain ATCC 35092 / DSM 1617 / JCM 11322 / P2) (Sulfolobus solfataricus).